The following is a 277-amino-acid chain: 4-hydroxybenzoate octaprenyltransferase (277 aa).

8 consecutive transmembrane segments (helical) span residues 24–44 (FAAA…LGVI), 81–101 (VEAK…DLSL), 102–122 (NQYA…YPFM), 129–149 (PQVV…GAVI), 152–172 (LPLT…AYDT), 201–221 (IIAL…WLSE), 224–244 (IGYF…CWLT), and 255–275 (AFLN…VGIY).

Belongs to the UbiA prenyltransferase family. Mg(2+) serves as cofactor.

The protein localises to the cell inner membrane. The enzyme catalyses all-trans-octaprenyl diphosphate + 4-hydroxybenzoate = 4-hydroxy-3-(all-trans-octaprenyl)benzoate + diphosphate. It participates in cofactor biosynthesis; ubiquinone biosynthesis. Its function is as follows. Catalyzes the prenylation of para-hydroxybenzoate (PHB) with an all-trans polyprenyl group. Mediates the second step in the final reaction sequence of ubiquinone-8 (UQ-8) biosynthesis, which is the condensation of the polyisoprenoid side chain with PHB, generating the first membrane-bound Q intermediate 3-octaprenyl-4-hydroxybenzoate. This Haemophilus ducreyi (strain 35000HP / ATCC 700724) protein is 4-hydroxybenzoate octaprenyltransferase.